The primary structure comprises 238 residues: Pyridoxine 5'-phosphate synthase (238 aa).

Residue Asn-7 participates in 3-amino-2-oxopropyl phosphate binding. Residue 9–10 (DH) coordinates 1-deoxy-D-xylulose 5-phosphate. Arg-18 is a 3-amino-2-oxopropyl phosphate binding site. His-43 functions as the Proton acceptor in the catalytic mechanism. Arg-45 and His-50 together coordinate 1-deoxy-D-xylulose 5-phosphate. Glu-70 functions as the Proton acceptor in the catalytic mechanism. Thr-100 contacts 1-deoxy-D-xylulose 5-phosphate. The active-site Proton donor is the His-190. 3-amino-2-oxopropyl phosphate-binding positions include Gly-191 and 212 to 213 (GH).

Belongs to the PNP synthase family. Homooctamer; tetramer of dimers.

It localises to the cytoplasm. The enzyme catalyses 3-amino-2-oxopropyl phosphate + 1-deoxy-D-xylulose 5-phosphate = pyridoxine 5'-phosphate + phosphate + 2 H2O + H(+). It participates in cofactor biosynthesis; pyridoxine 5'-phosphate biosynthesis; pyridoxine 5'-phosphate from D-erythrose 4-phosphate: step 5/5. Catalyzes the complicated ring closure reaction between the two acyclic compounds 1-deoxy-D-xylulose-5-phosphate (DXP) and 3-amino-2-oxopropyl phosphate (1-amino-acetone-3-phosphate or AAP) to form pyridoxine 5'-phosphate (PNP) and inorganic phosphate. This chain is Pyridoxine 5'-phosphate synthase, found in Prochlorococcus marinus (strain MIT 9312).